We begin with the raw amino-acid sequence, 152 residues long: MKKDVLIERIEELVRPIVSELSCELYYVEYVKENGEFYLRIYIDKEGRVSLNDCEAVSRRVSEILDVEDPIKEAYYLEVSSPGLNRGLYKEEHFKKYIGSEVLIRLTSSLNGVKSVKGLLRDVSEDSILVEGETEIQIPRDKIKAANLEGEI.

It belongs to the RimP family.

The protein resides in the cytoplasm. Functionally, required for maturation of 30S ribosomal subunits. This is Ribosome maturation factor RimP from Clostridium beijerinckii (strain ATCC 51743 / NCIMB 8052) (Clostridium acetobutylicum).